Consider the following 226-residue polypeptide: Ribonuclease 3 (226 aa).

One can recognise an RNase III domain in the interval 6 to 128 (MKKLQKFIGY…IIASIFLDSN (123 aa)). Glu41 lines the Mg(2+) pocket. Asp45 is an active-site residue. Mg(2+) is bound by residues Asn114 and Glu117. The active site involves Glu117. Residues 155–225 (DPKTRLQEYL…AQNALIRLEV (71 aa)) enclose the DRBM domain.

The protein belongs to the ribonuclease III family. Homodimer. The cofactor is Mg(2+).

Its subcellular location is the cytoplasm. The catalysed reaction is Endonucleolytic cleavage to 5'-phosphomonoester.. In terms of biological role, digests double-stranded RNA. Involved in the processing of primary rRNA transcript to yield the immediate precursors to the large and small rRNAs (23S and 16S). Processes some mRNAs, and tRNAs when they are encoded in the rRNA operon. Processes pre-crRNA and tracrRNA of type II CRISPR loci if present in the organism. The protein is Ribonuclease 3 of Buchnera aphidicola subsp. Cinara cedri (strain Cc).